We begin with the raw amino-acid sequence, 465 residues long: Cruciform DNA-recognizing protein 1 (465 aa).

Disordered regions lie at residues 107 to 227 (EAGG…VPNP) and 247 to 276 (RLNK…ALPQ). Residues 127–151 (NRKKNKRNNKKRRSKLKKKSTKNNK) show a composition bias toward basic residues. Phosphoserine is present on residues Ser-153 and Ser-156. Residues 156–165 (SLDDNEEEDG) are compositionally biased toward acidic residues. An X-DNA-binding region spans residues 160–161 (NE). Low complexity predominate over residues 166–177 (VTGTTTEDVTGT). Thr-182 is modified (phosphothreonine). The residue at position 271 (Ser-271) is a Phosphoserine. At Thr-295 the chain carries Phosphothreonine. The interval 298–465 (VEAVTPLINE…FFGKLKKLFK (168 aa)) is disordered. 2 positions are modified to phosphoserine: Ser-319 and Ser-343. Residues 337 to 363 (LVEKRESTEGVLDGSKKVENKAKKDEE) are compositionally biased toward basic and acidic residues. Thr-366 is modified (phosphothreonine). 2 stretches are compositionally biased toward basic and acidic residues: residues 385-398 (AEGR…EEKE) and 404-428 (EKGS…EVKK). Ser-394 carries the phosphoserine modification. Phosphoserine is present on Ser-440. Basic residues predominate over residues 451-465 (KKKTGFFGKLKKLFK).

Belongs to the CRP1/MDG1 family. In terms of processing, cleaved in the vicinity of position 160 to give an X-DNA-binding N-terminal subpeptide and a non-DNA-binding C-terminal subpeptide.

Its function is as follows. Cruciform DNA-binding protein which exerts an enhancing effect on the cleavage of cruciform DNA (X-DNA) by endonuclease VII from bacteriophage T4. This Saccharomyces cerevisiae (strain RM11-1a) (Baker's yeast) protein is Cruciform DNA-recognizing protein 1 (CRP1).